Reading from the N-terminus, the 399-residue chain is Tryptophan synthase beta chain (399 aa).

Lys-92 carries the post-translational modification N6-(pyridoxal phosphate)lysine.

This sequence belongs to the TrpB family. Tetramer of two alpha and two beta chains. Pyridoxal 5'-phosphate serves as cofactor.

It carries out the reaction (1S,2R)-1-C-(indol-3-yl)glycerol 3-phosphate + L-serine = D-glyceraldehyde 3-phosphate + L-tryptophan + H2O. The protein operates within amino-acid biosynthesis; L-tryptophan biosynthesis; L-tryptophan from chorismate: step 5/5. In terms of biological role, the beta subunit is responsible for the synthesis of L-tryptophan from indole and L-serine. The chain is Tryptophan synthase beta chain from Thiobacillus denitrificans (strain ATCC 25259 / T1).